A 1010-amino-acid polypeptide reads, in one-letter code: Outer kinetochore KNL1 complex subunit knl-1 (1010 aa).

Repeat copies occupy residues 85–88 (MDIS), 109–112 (MDMS), 228–231 (MDTS), 255–258 (MDIT), 278–281 (MDIS), 323–326 (MDIT), 346–349 (MDIS), 402–405 (MDIT), and 428–431 (MDIS). A 9 X 4 AA repeats of M-[D/E]-[I/L/M]-[S/T] region spans residues 85 to 431 (MDISESPACT…LQKEDLMDIS (347 aa)). Coiled coils occupy residues 820–915 (RIVE…GLDK) and 956–988 (KALRNVRSNMIALRSEKNALEMKVAEEHEKFAQ).

In terms of assembly, component of the KNL1 complex composed of knl-1 and kbp-5. Part of the ten-subunit outer kinetochore KMN network that includes the KNL1, MIS12 and NDC80 complexes. Interacts with the protein phosphatase 1 (PP1) catalytic subunit gsp-1; the interaction is direct. Interacts with the protein phosphatase 1 (PP1) catalytic subunit gsp-2; the interaction is direct. Interacts with the MIS12 complex subunits kbp-1, kbp-2 and mis-12. Interacts with the NDC80 complex components ndc-80 and him-10. Interacts with knl-3. Interacts with kbp-3. Interacts with kbp-4. Interacts with kbp-5.

The protein resides in the cytoplasm. Its subcellular location is the cell cortex. It is found in the chromosome. It localises to the centromere. The protein localises to the kinetochore. Acts as a component of the outer kinetochore KNL1 complex that serves as a docking point for spindle assembly checkpoint components and mediates microtubule-kinetochore interactions. Kinetochores, consisting of a centromere-associated inner segment and a microtubule-contacting outer segment, play a crucial role in chromosome segregation by mediating the physical connection between centromeric DNA and spindle microtubules. The outer kinetochore is made up of the ten-subunit KMN network, comprising the MIS12, NDC80 and KNL1 complexes, and auxiliary microtubule-associated components; together they connect the outer kinetochore with the inner kinetochore, bind microtubules, and mediate interactions with mitotic checkpoint proteins that delay anaphase until chromosomes are bioriented on the spindle. Binds the protein phosphatase 1 catalytic subunits gsp-1 and gsp-2, which has a role in delaying formation of load-bearing kinetochore-microtubule attachments. Required for the recruitment of spindle-assembly checkpoint components bub-1 and mdf-1/2 to unattached kinetochores. Binds microtubules which plays a role in silencing of the spindle assembly checkpoint, but not the formation of load-bearing microtubule-kinetochore attachments. Has a role in the correct localization of the spindly-like protein spdl-1 and the RZZ complex that is composed of rod-1, czw-1 and zwl-1 to kinetochores. The chain is Outer kinetochore KNL1 complex subunit knl-1 (knl-1) from Caenorhabditis elegans.